Consider the following 322-residue polypeptide: tRNA U34 carboxymethyltransferase (322 aa).

Residues Lys-91, Trp-105, Lys-110, Gly-129, Leu-179–Glu-180, Met-195, Tyr-199, and Arg-314 contribute to the carboxy-S-adenosyl-L-methionine site.

Belongs to the class I-like SAM-binding methyltransferase superfamily. CmoB family. As to quaternary structure, homotetramer.

It catalyses the reaction carboxy-S-adenosyl-L-methionine + 5-hydroxyuridine(34) in tRNA = 5-carboxymethoxyuridine(34) in tRNA + S-adenosyl-L-homocysteine + H(+). In terms of biological role, catalyzes carboxymethyl transfer from carboxy-S-adenosyl-L-methionine (Cx-SAM) to 5-hydroxyuridine (ho5U) to form 5-carboxymethoxyuridine (cmo5U) at position 34 in tRNAs. The polypeptide is tRNA U34 carboxymethyltransferase (Pseudomonas paraeruginosa (strain DSM 24068 / PA7) (Pseudomonas aeruginosa (strain PA7))).